The sequence spans 150 residues: D-aminoacyl-tRNA deacylase (150 aa).

The short motif at 138–139 (GP) is the Gly-cisPro motif, important for rejection of L-amino acids element.

It belongs to the DTD family. In terms of assembly, homodimer.

The protein resides in the cytoplasm. The enzyme catalyses glycyl-tRNA(Ala) + H2O = tRNA(Ala) + glycine + H(+). It carries out the reaction a D-aminoacyl-tRNA + H2O = a tRNA + a D-alpha-amino acid + H(+). Functionally, an aminoacyl-tRNA editing enzyme that deacylates mischarged D-aminoacyl-tRNAs. Also deacylates mischarged glycyl-tRNA(Ala), protecting cells against glycine mischarging by AlaRS. Acts via tRNA-based rather than protein-based catalysis; rejects L-amino acids rather than detecting D-amino acids in the active site. By recycling D-aminoacyl-tRNA to D-amino acids and free tRNA molecules, this enzyme counteracts the toxicity associated with the formation of D-aminoacyl-tRNA entities in vivo and helps enforce protein L-homochirality. In Azobacteroides pseudotrichonymphae genomovar. CFP2, this protein is D-aminoacyl-tRNA deacylase.